The following is a 194-amino-acid chain: NAD(P)H-quinone oxidoreductase subunit I (194 aa).

4Fe-4S ferredoxin-type domains lie at 55-84 and 95-124; these read GRIHYEFDKCIACEVCVRVCPINLPVVDWE and NHYSIDFGVCIFCGNCVEYCPTNCLSMTEE. Positions 64, 67, 70, 74, 104, 107, 110, and 114 each coordinate [4Fe-4S] cluster. A disordered region spans residues 173–194; that stretch reads DLPANAPRPGARPEDLVEKTEA. Over residues 183-194 the composition is skewed to basic and acidic residues; it reads ARPEDLVEKTEA.

The protein belongs to the complex I 23 kDa subunit family. As to quaternary structure, NDH-1 is composed of at least 11 different subunits. [4Fe-4S] cluster serves as cofactor.

It localises to the cellular thylakoid membrane. It carries out the reaction a plastoquinone + NADH + (n+1) H(+)(in) = a plastoquinol + NAD(+) + n H(+)(out). It catalyses the reaction a plastoquinone + NADPH + (n+1) H(+)(in) = a plastoquinol + NADP(+) + n H(+)(out). Functionally, NDH-1 shuttles electrons from an unknown electron donor, via FMN and iron-sulfur (Fe-S) centers, to quinones in the respiratory and/or the photosynthetic chain. The immediate electron acceptor for the enzyme in this species is believed to be plastoquinone. Couples the redox reaction to proton translocation, and thus conserves the redox energy in a proton gradient. This Nostoc sp. (strain PCC 7120 / SAG 25.82 / UTEX 2576) protein is NAD(P)H-quinone oxidoreductase subunit I.